We begin with the raw amino-acid sequence, 1343 residues long: DNA-directed RNA polymerase subunit beta (1343 aa).

The protein belongs to the RNA polymerase beta chain family. The RNAP catalytic core consists of 2 alpha, 1 beta, 1 beta' and 1 omega subunit. When a sigma factor is associated with the core the holoenzyme is formed, which can initiate transcription.

The catalysed reaction is RNA(n) + a ribonucleoside 5'-triphosphate = RNA(n+1) + diphosphate. Its function is as follows. DNA-dependent RNA polymerase catalyzes the transcription of DNA into RNA using the four ribonucleoside triphosphates as substrates. The chain is DNA-directed RNA polymerase subunit beta from Shewanella pealeana (strain ATCC 700345 / ANG-SQ1).